The following is a 354-amino-acid chain: UDP-N-acetylglucosamine--N-acetylmuramyl-(pentapeptide) pyrophosphoryl-undecaprenol N-acetylglucosamine transferase (354 aa).

Residues 11–13 (TAG), Arg164, Ser194, and Gln289 contribute to the UDP-N-acetyl-alpha-D-glucosamine site.

Belongs to the glycosyltransferase 28 family. MurG subfamily.

It localises to the cell membrane. The enzyme catalyses di-trans,octa-cis-undecaprenyl diphospho-N-acetyl-alpha-D-muramoyl-L-alanyl-D-glutamyl-meso-2,6-diaminopimeloyl-D-alanyl-D-alanine + UDP-N-acetyl-alpha-D-glucosamine = di-trans,octa-cis-undecaprenyl diphospho-[N-acetyl-alpha-D-glucosaminyl-(1-&gt;4)]-N-acetyl-alpha-D-muramoyl-L-alanyl-D-glutamyl-meso-2,6-diaminopimeloyl-D-alanyl-D-alanine + UDP + H(+). It participates in cell wall biogenesis; peptidoglycan biosynthesis. Cell wall formation. Catalyzes the transfer of a GlcNAc subunit on undecaprenyl-pyrophosphoryl-MurNAc-pentapeptide (lipid intermediate I) to form undecaprenyl-pyrophosphoryl-MurNAc-(pentapeptide)GlcNAc (lipid intermediate II). The polypeptide is UDP-N-acetylglucosamine--N-acetylmuramyl-(pentapeptide) pyrophosphoryl-undecaprenol N-acetylglucosamine transferase (Clostridium botulinum (strain Kyoto / Type A2)).